The chain runs to 181 residues: dTDP-4-dehydrorhamnose 3,5-epimerase (181 aa).

Substrate contacts are provided by residues Arg-23, Glu-28, 47–49 (QDN), and Arg-59. The Proton acceptor role is filled by His-62. Substrate is bound by residues Lys-72 and His-119. The active-site Proton donor is Tyr-132. Positions 143 and 167 each coordinate substrate.

Belongs to the dTDP-4-dehydrorhamnose 3,5-epimerase family. As to quaternary structure, homodimer.

The enzyme catalyses dTDP-4-dehydro-6-deoxy-alpha-D-glucose = dTDP-4-dehydro-beta-L-rhamnose. It participates in carbohydrate biosynthesis; dTDP-L-rhamnose biosynthesis. Its pathway is bacterial outer membrane biogenesis; LPS O-antigen biosynthesis. Its function is as follows. Catalyzes the epimerization of the C3' and C5'positions of dTDP-6-deoxy-D-xylo-4-hexulose, forming dTDP-6-deoxy-L-lyxo-4-hexulose. This Shigella flexneri protein is dTDP-4-dehydrorhamnose 3,5-epimerase (rfbC).